The primary structure comprises 1053 residues: Focal adhesion kinase 1 (1053 aa).

A disordered region spans residues 1–27; sequence MAAAYLDPNLNHTPSSSAKTHLGTGME. Residues 10–19 are compositionally biased toward polar residues; the sequence is LNHTPSSSAK. Positions 35–355 constitute an FERM domain; it reads RVLKVFHYFE…GYCRLVNGAT (321 aa). Y397 is modified (phosphotyrosine; by autocatalysis). Residue Y407 is modified to Phosphotyrosine. Positions 422-680 constitute a Protein kinase domain; that stretch reads IELGRCIGEG…ELKAQLSTIL (259 aa). ATP is bound by residues 428-434, K454, and 500-502; these read IGEGQFG and ELC. D546 serves as the catalytic Proton acceptor. Phosphotyrosine; by SRC is present on residues Y576 and Y577. The segment covering 686 to 697 has biased composition (basic and acidic residues); it reads QQEERMRMESRR. 2 disordered regions span residues 686–741 and 843–892; these read QQEE…QPNH and RGSI…LASL. Y863 carries the post-translational modification Phosphotyrosine. S911 carries the phosphoserine modification. Y926 carries the phosphotyrosine modification.

The protein belongs to the protein kinase superfamily. Tyr protein kinase family. FAK subfamily. Interacts with ARHGAP26, GRB7, DCC, PIK3R1, PXN and SRC. Interacts with the ARP2/3 complex. Post-translationally, phosphorylated on tyrosine residues upon activation, e.g. upon integrin signaling. Tyr-397 is the major autophosphorylation site, but other kinases can also phosphorylate this residue. Phosphorylation at Tyr-397 promotes interaction with SRC and SRC family members, leading to phosphorylation at Tyr-576, Tyr-577 and at additional tyrosine residues. Isoform 2 is phosphorylated on serine or threonine residues, but apparently not on tyrosine residues.

The protein localises to the cell junction. The protein resides in the focal adhesion. Its subcellular location is the cell membrane. It is found in the cytoplasm. It localises to the perinuclear region. The protein localises to the cell cortex. The protein resides in the cytoskeleton. Its subcellular location is the microtubule organizing center. It is found in the centrosome. It localises to the nucleus. The protein localises to the cilium basal body. It carries out the reaction L-tyrosyl-[protein] + ATP = O-phospho-L-tyrosyl-[protein] + ADP + H(+). Its activity is regulated as follows. Subject to autoinhibition, mediated by interactions between the FERM domain and the kinase domain. Activated by autophosphorylation at Tyr-397. This promotes interaction with SRC and phosphorylation at Tyr-576 and Tyr-577 in the kinase activation loop. Phosphorylation at Tyr-576 and Tyr-577 is required for maximal kinase activity. Inhibited by TAE226. Non-receptor protein-tyrosine kinase that plays an essential role in regulating cell migration, adhesion, spreading, reorganization of the actin cytoskeleton, formation and disassembly of focal adhesions and cell protrusions, cell cycle progression, cell proliferation and apoptosis. Required for early embryonic development, embryonic angiogenesis, normal cardiomyocyte migration and proliferation, and normal heart development. Regulates axon growth and neuronal cell migration, axon branching and synapse formation; required for normal development of the nervous system. Plays a role in osteogenesis and differentiation of osteoblasts. Functions in integrin signal transduction, but also in signaling downstream of numerous growth factor receptors, G-protein coupled receptors (GPCR), ephrin receptors, netrin receptors and LDL receptors. Forms multisubunit signaling complexes with SRC and SRC family members upon activation; this leads to the phosphorylation of additional tyrosine residues, creating binding sites for scaffold proteins, effectors and substrates. Regulates numerous signaling pathways. Promotes activation of phosphatidylinositol 3-kinase and the AKT1 signaling cascade. Promotes activation of MAPK1/ERK2, MAPK3/ERK1 and the MAP kinase signaling cascade. Promotes localized and transient activation of guanine nucleotide exchange factors (GEFs) and GTPase-activating proteins (GAPs), and thereby modulates the activity of Rho family GTPases. Signaling via CAS family members mediates activation of RAC1. Regulates P53/TP53 activity and stability. Phosphorylates SRC; this increases SRC kinase activity. Isoform 2 (FRNK) does not contain a kinase domain and inhibits PTK2/FAK1 phosphorylation and signaling. In Gallus gallus (Chicken), this protein is Focal adhesion kinase 1 (PTK2).